Consider the following 105-residue polypeptide: Small ribosomal subunit protein uS10 (105 aa).

This sequence belongs to the universal ribosomal protein uS10 family. In terms of assembly, part of the 30S ribosomal subunit.

Involved in the binding of tRNA to the ribosomes. The polypeptide is Small ribosomal subunit protein uS10 (Lachnoclostridium phytofermentans (strain ATCC 700394 / DSM 18823 / ISDg) (Clostridium phytofermentans)).